The chain runs to 348 residues: MNPIIISMIGFTIILGTTIVLMSSHWFMIWIGFEMNMLAIIPVLMKSHHPRSTEASTKYFLTQTTASMLMLLSVMINLIYTGQWTAMKLANPTASTIMTLSLAMKLGLSPFHFWVPEVTQGIPLTSGLILLTWQKLAPLSVLYIASPNLNMTMLLTMSILSVVMGGWGGLNQTQLRKILAFSSIAHMGWMTAIIMFNPTLTLLNLLLYILMTTTIFMILIFTKSTTTLSISYMWNKTPIMTVIMLTILMSLGGLPPLSGFMPKWMIIQELTKNNNIALALIMAMSALLNLYFYMRLMYATTLTMFPSSNNIKMKWYYTNNLPTKYLPTLTIMSTLLLPLTPMMMMLLN.

The next 10 membrane-spanning stretches (helical) occupy residues 3–23 (PIIISMIGFTIILGTTIVLMS), 25–45 (HWFMIWIGFEMNMLAIIPVLM), 59–79 (YFLTQTTASMLMLLSVMINLI), 93–115 (TASTIMTLSLAMKLGLSPFHFWV), 149–169 (LNMTMLLTMSILSVVMGGWGG), 178–198 (ILAFSSIAHMGWMTAIIMFNP), 201–221 (TLLNLLLYILMTTTIFMILIF), 239–259 (IMTVIMLTILMSLGGLPPLSG), 276–296 (IALALIMAMSALLNLYFYMRL), and 326–346 (LPTLTIMSTLLLPLTPMMMML).

The protein belongs to the complex I subunit 2 family. Core subunit of respiratory chain NADH dehydrogenase (Complex I) which is composed of 45 different subunits. Interacts with TMEM242.

The protein localises to the mitochondrion inner membrane. It catalyses the reaction a ubiquinone + NADH + 5 H(+)(in) = a ubiquinol + NAD(+) + 4 H(+)(out). Core subunit of the mitochondrial membrane respiratory chain NADH dehydrogenase (Complex I) which catalyzes electron transfer from NADH through the respiratory chain, using ubiquinone as an electron acceptor. Essential for the catalytic activity and assembly of complex I. In Thyroptera tricolor (Spix's disk-winged bat), this protein is NADH-ubiquinone oxidoreductase chain 2.